Here is a 37-residue protein sequence, read N- to C-terminus: Large ribosomal subunit protein bL36c (37 aa).

It belongs to the bacterial ribosomal protein bL36 family.

Its subcellular location is the plastid. The protein resides in the chloroplast. In Bigelowiella natans (Pedinomonas minutissima), this protein is Large ribosomal subunit protein bL36c.